Consider the following 643-residue polypeptide: Threonine--tRNA ligase (643 aa).

In terms of domain architecture, TGS spans 1–61 (MPIITLPDGS…EQDATLEIIT (61 aa)). The interval 243–534 (DHRKIGKALD…ITEEYAGFFP (292 aa)) is catalytic. Residues C334, H385, and H511 each contribute to the Zn(2+) site.

This sequence belongs to the class-II aminoacyl-tRNA synthetase family. As to quaternary structure, homodimer. Zn(2+) serves as cofactor.

It is found in the cytoplasm. It catalyses the reaction tRNA(Thr) + L-threonine + ATP = L-threonyl-tRNA(Thr) + AMP + diphosphate + H(+). Catalyzes the attachment of threonine to tRNA(Thr) in a two-step reaction: L-threonine is first activated by ATP to form Thr-AMP and then transferred to the acceptor end of tRNA(Thr). Also edits incorrectly charged L-seryl-tRNA(Thr). This is Threonine--tRNA ligase from Haemophilus influenzae (strain PittEE).